The chain runs to 331 residues: Nucleotide sugar transporter SLC35B4 (331 aa).

A run of 11 helical transmembrane segments spans residues 4-24, 30-50, 59-79, 92-112, 124-144, 153-173, 201-221, 229-249, 251-267, 268-288, and 294-314; these read AFAVGLVFAGCCSNVIFLELL, GCGNIVTFAQFLFIAVEGFLF, PAIPIRYYAIMVTMFFTVSVV, LHMIFRSGSLIANMILGIIIL, IALVSAGIFICTFMSAKQVTV, GFQAFAWWLLGIAALTFALLM, ALPLPGFIFLASDIYDHVVLF, VPVIGVTMPVMWFYLLMNVVT, YVCIRGVFILTTECTSL, TVTLVVTLRKFVSLIFSILYF, and MWHWLGTSFVFIGTLMYTEVW. The short motif at 326–331 is the Mediates endoplasmic reticulum retention element; sequence KDDKKD.

This sequence belongs to the nucleotide-sugar transporter family. SLC35B subfamily.

The protein resides in the endoplasmic reticulum membrane. It carries out the reaction UDP-N-acetyl-alpha-D-glucosamine(in) + UDP-alpha-D-glucuronate(out) = UDP-N-acetyl-alpha-D-glucosamine(out) + UDP-alpha-D-glucuronate(in). The catalysed reaction is UDP-alpha-D-xylose(in) + UDP-alpha-D-glucuronate(out) = UDP-alpha-D-xylose(out) + UDP-alpha-D-glucuronate(in). Antiporter that transports nucleotide sugars across the endoplasmic reticulum (ER) membrane in exchange for another nucleotide sugar. May couple UDP-alpha-D-glucuronate (UDP-GlcA) or UDP-alpha-D-xylose (UDP-Xyl) efflux to UDP-alpha-D-glucuronate (UDP-GlcA) influx into the ER lumen, which in turn stimulates glucuronidation and excretion of endobiotics and xenobiotics. The sequence is that of Nucleotide sugar transporter SLC35B4 (Slc35b4) from Mus musculus (Mouse).